Reading from the N-terminus, the 565-residue chain is Sulfite reductase [NADPH] hemoprotein beta-component (565 aa).

Positions 429, 435, 474, and 478 each coordinate [4Fe-4S] cluster. A siroheme-binding site is contributed by Cys-478.

It belongs to the nitrite and sulfite reductase 4Fe-4S domain family. Alpha(8)-beta(8). The alpha component is a flavoprotein, the beta component is a hemoprotein. The cofactor is siroheme. It depends on [4Fe-4S] cluster as a cofactor.

The enzyme catalyses hydrogen sulfide + 3 NADP(+) + 3 H2O = sulfite + 3 NADPH + 4 H(+). It participates in sulfur metabolism; hydrogen sulfide biosynthesis; hydrogen sulfide from sulfite (NADPH route): step 1/1. Its function is as follows. Component of the sulfite reductase complex that catalyzes the 6-electron reduction of sulfite to sulfide. This is one of several activities required for the biosynthesis of L-cysteine from sulfate. This Shewanella baltica (strain OS185) protein is Sulfite reductase [NADPH] hemoprotein beta-component.